Consider the following 142-residue polypeptide: Dromaiocalcin-2 (142 aa).

3 disulfides stabilise this stretch: C6–C17, C34–C138, and C113–C130. The C-type lectin domain occupies 13–139 (FDGRCYGFFP…CSDRKPFICA (127 aa)). 2 positions are modified to phosphoserine: S62 and S68.

A minor form with some unmodified Ser-68 and partial phosphorylation of Ser-66 may also occur.

Its subcellular location is the secreted. The protein resides in the extracellular space. It localises to the extracellular matrix. The polypeptide is Dromaiocalcin-2 (Dromaius novaehollandiae (Emu)).